The primary structure comprises 185 residues: MISSNDFRTGVSIELDGSVWRVVEFLHVKPGKGSAFVRTKLKNVQSGSVVERTFRAGETVPQANLEKRVMQHTYKDGDQFVFMDMESYEEASLSQEQIGTRVKYLKEGMEVNVIQWGEQVLEVELPTSVVLEVTQTDPGVKGDTATGGSKPAIVETGAQVMVPLFISEGERIKVDTRNDSYLGRE.

It belongs to the elongation factor P family.

The protein resides in the cytoplasm. It participates in protein biosynthesis; polypeptide chain elongation. Its function is as follows. Involved in peptide bond synthesis. Stimulates efficient translation and peptide-bond synthesis on native or reconstituted 70S ribosomes in vitro. Probably functions indirectly by altering the affinity of the ribosome for aminoacyl-tRNA, thus increasing their reactivity as acceptors for peptidyl transferase. This is Elongation factor P from Acaryochloris marina (strain MBIC 11017).